The chain runs to 442 residues: 3-phosphoshikimate 1-carboxyvinyltransferase (442 aa).

Residues Lys-25, Ser-26, and Arg-30 each contribute to the 3-phosphoshikimate site. Lys-25 lines the phosphoenolpyruvate pocket. Residues Gly-96 and Arg-124 each contribute to the phosphoenolpyruvate site. 3-phosphoshikimate-binding residues include Ser-171, Ser-172, Gln-173, Ser-203, Asp-325, and Lys-352. Gln-173 is a binding site for phosphoenolpyruvate. The Proton acceptor role is filled by Asp-325. Residues Arg-356, Arg-400, and Lys-425 each contribute to the phosphoenolpyruvate site.

It belongs to the EPSP synthase family. As to quaternary structure, monomer.

The protein localises to the cytoplasm. The catalysed reaction is 3-phosphoshikimate + phosphoenolpyruvate = 5-O-(1-carboxyvinyl)-3-phosphoshikimate + phosphate. It participates in metabolic intermediate biosynthesis; chorismate biosynthesis; chorismate from D-erythrose 4-phosphate and phosphoenolpyruvate: step 6/7. In terms of biological role, catalyzes the transfer of the enolpyruvyl moiety of phosphoenolpyruvate (PEP) to the 5-hydroxyl of shikimate-3-phosphate (S3P) to produce enolpyruvyl shikimate-3-phosphate and inorganic phosphate. The polypeptide is 3-phosphoshikimate 1-carboxyvinyltransferase (Bordetella parapertussis (strain 12822 / ATCC BAA-587 / NCTC 13253)).